The following is a 267-amino-acid chain: Rhomboid-type serine protease 2 (267 aa).

6 consecutive transmembrane segments (helical) span residues 20-40 (LPLF…ASLQ), 67-87 (FPLI…LTPL), 99-119 (TSLA…YVLI), 126-146 (ANHG…MESI), 155-179 (FVIG…AALI), and 185-206 (LGHL…KLLA). Catalysis depends on serine 134, which acts as the Nucleophile. Residue histidine 187 is part of the active site. The tract at residues 247–267 (RPGPSGSAATELVGTTQRLGP) is disordered.

Belongs to the peptidase S54 family.

It localises to the golgi apparatus membrane. The protein resides in the golgi apparatus. Its subcellular location is the cis-Golgi network membrane. It carries out the reaction Cleaves type-1 transmembrane domains using a catalytic dyad composed of serine and histidine that are contributed by different transmembrane domains.. In terms of biological role, probable rhomboid-type serine protease that catalyzes intramembrane proteolysis. In Gibberella zeae (strain ATCC MYA-4620 / CBS 123657 / FGSC 9075 / NRRL 31084 / PH-1) (Wheat head blight fungus), this protein is Rhomboid-type serine protease 2 (RBD2).